Reading from the N-terminus, the 314-residue chain is MMKDLDKLAVAIIGSGNIGTDLMIKVLRHAKHLDVAAMVGIDPASDGLARAARLGVPTTAGGIDGLVAMPGFADVRIAFDATSAGAHARHAEVLGRHGVQVIDLTPAAIGPFVVPVVNLFEHLDAPNLNMVTCGGQATIPIVHAVSRVAPVHYAEIVASISSRSAGPGTRANIDEFTETTSKAIETVGGAARGKAIIVLNPAEPPLMMRDTVYCLTDEDADTAAIEHSIRTMVDAVASYVPGYRLKQAVQFDRYTAAQPLAFDAGERRAGLKVSVFLEVEGAAHYLPSYAGNLDIMTSAALAAAEQIAASRVAA.

Position 15-18 (15-18 (SGNI)) interacts with NAD(+). Catalysis depends on Cys-133, which acts as the Acyl-thioester intermediate. Residues 164–172 (SAGPGTRAN) and Asn-292 each bind NAD(+).

The protein belongs to the acetaldehyde dehydrogenase family.

It catalyses the reaction acetaldehyde + NAD(+) + CoA = acetyl-CoA + NADH + H(+). This Burkholderia lata (strain ATCC 17760 / DSM 23089 / LMG 22485 / NCIMB 9086 / R18194 / 383) protein is Acetaldehyde dehydrogenase 4.